The primary structure comprises 1546 residues: Mediator of RNA polymerase II transcription subunit 14 (1546 aa).

Short sequence motifs (LXXLL motif) lie at residues 51–55 (LAELL) and 468–472 (LPSLL). 3 disordered regions span residues 692-717 (KSAT…PSGS), 1000-1193 (GRAP…NRPW), and 1512-1546 (NPMM…GGPQ). 3 stretches are compositionally biased toward low complexity: residues 693–717 (SATA…PSGS), 1020–1035 (GGPS…GSSP), and 1061–1075 (PSSS…PHPS). Positions 1093 to 1102 (PPAPHMPHPS) are enriched in pro residues. Over residues 1125–1149 (GPNTLYMQSHQDSPFTAMSPANNQW) the composition is skewed to polar residues. Pro residues predominate over residues 1153-1163 (PSMPRPSPRPG). The segment covering 1515 to 1527 (MPMQQLQPQVGPQ) has biased composition (low complexity).

It belongs to the Mediator complex subunit 14 family. In terms of assembly, component of the Mediator complex.

It is found in the nucleus. Its function is as follows. Component of the Mediator complex, a coactivator involved in the regulated transcription of nearly all RNA polymerase II-dependent genes. Mediator functions as a bridge to convey information from gene-specific regulatory proteins to the basal RNA polymerase II transcription machinery. Mediator is recruited to promoters by direct interactions with regulatory proteins and serves as a scaffold for the assembly of a functional preinitiation complex with RNA polymerase II and the general transcription factors. The protein is Mediator of RNA polymerase II transcription subunit 14 (MED14) of Drosophila pseudoobscura pseudoobscura (Fruit fly).